The primary structure comprises 68 residues: Beta-defensin 1 (68 aa).

The first 21 residues, 1–21 (MRTSYLLLFTLCLLLSEMASG), serve as a signal peptide directing secretion. Residues 22-32 (DNFLTGLGHRS) constitute a propeptide that is removed on maturation. 3 disulfides stabilise this stretch: Cys37/Cys66, Cys44/Cys59, and Cys49/Cys67.

It belongs to the beta-defensin family. As to quaternary structure, monomer. Homodimer.

The protein resides in the secreted. Its subcellular location is the membrane. Functionally, has bactericidal activity. May act as a ligand for C-C chemokine receptor CCR6. Positively regulates the sperm motility and bactericidal activity in a CCR6-dependent manner. Binds to CCR6 and triggers Ca2+ mobilization in the sperm which is important for its motility. The sequence is that of Beta-defensin 1 (DEFB1) from Hylobates moloch (Silvery gibbon).